The primary structure comprises 735 residues: Transcription factor RFX4 (735 aa).

Residues 25 to 59 (SESKRFSSHSSIGNISNDENEEKENNRASKPHSTP) are disordered. A DNA-binding region spans residues 44-126 (NEEKENNRAS…RRLGTRGQSK (83 aa)). The segment at residues 61 to 136 (TLQWLEENYE…YHYYGIAVKE (76 aa)) is a DNA-binding region (RFX-type winged-helix). The necessary for dimerization stretch occupies residues 315 to 487 (RFSQILKRQT…NELMRAMKGE (173 aa)).

Belongs to the RFX family.

It localises to the nucleus. In terms of biological role, may activate transcription by interacting directly with the X-box. The polypeptide is Transcription factor RFX4 (rfx4) (Danio rerio (Zebrafish)).